A 425-amino-acid chain; its full sequence is D-amino acid dehydrogenase (425 aa).

An FAD-binding site is contributed by 3–17 (VLVMGAGVIGVTTAY).

This sequence belongs to the DadA oxidoreductase family. FAD is required as a cofactor.

It catalyses the reaction a D-alpha-amino acid + A + H2O = a 2-oxocarboxylate + AH2 + NH4(+). The protein operates within amino-acid degradation; D-alanine degradation; NH(3) and pyruvate from D-alanine: step 1/1. Functionally, oxidative deamination of D-amino acids. This chain is D-amino acid dehydrogenase, found in Rhodopseudomonas palustris (strain HaA2).